Consider the following 177-residue polypeptide: Ubiquinol-cytochrome c reductase iron-sulfur subunit (177 aa).

Residues 18–38 (IVLTASSVAAVGAACAFWPII) traverse the membrane as a helical segment. Residues 88–175 (ARAVKMSELI…YIFISDKKIR (88 aa)) enclose the Rieske domain. Cys120, His122, Cys139, and His142 together coordinate [2Fe-2S] cluster. Cys125 and Cys141 are disulfide-bonded.

Belongs to the Rieske iron-sulfur protein family. As to quaternary structure, the main subunits of complex b-c1 are: cytochrome b, cytochrome c1 and the Rieske protein. Requires [2Fe-2S] cluster as cofactor.

It is found in the cell membrane. It carries out the reaction a quinol + 2 Fe(III)-[cytochrome c](out) = a quinone + 2 Fe(II)-[cytochrome c](out) + 2 H(+)(out). Functionally, component of the ubiquinol-cytochrome c reductase complex (complex III or cytochrome b-c1 complex), which is a respiratory chain that generates an electrochemical potential coupled to ATP synthesis. The polypeptide is Ubiquinol-cytochrome c reductase iron-sulfur subunit (petA) (Rickettsia prowazekii (strain Madrid E)).